The sequence spans 613 residues: Portal protein (613 aa).

Residues 577–613 (ATGGDHGIRQAPSARGDAEPDHAKSKPARDPPPGAGS) are disordered. Basic and acidic residues predominate over residues 592–605 (GDAEPDHAKSKPAR).

Belongs to the herpesviridae portal protein family. In terms of assembly, homododecamerizes. Interacts with terminase subunits TRM1 and TRM3.

Its subcellular location is the virion. The protein localises to the host nucleus. Forms a portal in the viral capsid through which viral DNA is translocated during DNA packaging. Assembles as a dodecamer at a single fivefold axe of the T=16 icosahedric capsid. Binds to the molecular motor that translocates the viral DNA, termed terminase. The polypeptide is Portal protein (Homo sapiens (Human)).